Consider the following 92-residue polypeptide: Small ribosomal subunit protein uS19 (92 aa).

Belongs to the universal ribosomal protein uS19 family.

Its function is as follows. Protein S19 forms a complex with S13 that binds strongly to the 16S ribosomal RNA. This chain is Small ribosomal subunit protein uS19, found in Methylobacterium nodulans (strain LMG 21967 / CNCM I-2342 / ORS 2060).